Consider the following 171-residue polypeptide: UPF0303 protein YPTS_2661 (171 aa).

This sequence belongs to the UPF0303 family.

In Yersinia pseudotuberculosis serotype IB (strain PB1/+), this protein is UPF0303 protein YPTS_2661.